The chain runs to 427 residues: Adenylosuccinate synthetase (427 aa).

GTP contacts are provided by residues 12-18 and 40-42; these read GDEGKGK and GHT. Residue Asp13 is the Proton acceptor of the active site. Mg(2+) contacts are provided by Asp13 and Gly40. Residues 13–16, 38–41, Thr128, Arg142, Gln223, Thr238, and Arg302 contribute to the IMP site; these read DEGK and NAGH. The active-site Proton donor is the His41. 298–304 provides a ligand contact to substrate; it reads TTTGRPR. GTP-binding positions include Arg304, 330–332, and 412–414; these read SID and SVG.

Belongs to the adenylosuccinate synthetase family. As to quaternary structure, homodimer. The cofactor is Mg(2+).

The protein resides in the cytoplasm. The catalysed reaction is IMP + L-aspartate + GTP = N(6)-(1,2-dicarboxyethyl)-AMP + GDP + phosphate + 2 H(+). It participates in purine metabolism; AMP biosynthesis via de novo pathway; AMP from IMP: step 1/2. Functionally, plays an important role in the de novo pathway of purine nucleotide biosynthesis. Catalyzes the first committed step in the biosynthesis of AMP from IMP. In Staphylococcus epidermidis (strain ATCC 12228 / FDA PCI 1200), this protein is Adenylosuccinate synthetase.